The chain runs to 734 residues: Adhesion G protein-coupled receptor E5 (734 aa).

The signal sequence occupies residues 1–26; sequence MGGPHGGPFLLFHVLCFLLTLSEVGS. Over 27 to 449 the chain is Extracellular; it reads QNSKACALPC…VEDPKLALIT (423 aa). Positions 28–70 constitute an EGF-like 1 domain; the sequence is NSKACALPCPPNSSCVNGTACRCAPGFISFSGEIFTDPLESCD. 9 disulfides stabilise this stretch: Cys-32/Cys-42, Cys-36/Cys-48, Cys-50/Cys-69, Cys-75/Cys-89, Cys-83/Cys-98, Cys-100/Cys-121, Cys-127/Cys-140, Cys-134/Cys-149, and Cys-151/Cys-170. 2 N-linked (GlcNAc...) asparagine glycosylation sites follow: Asn-39 and Asn-44. Positions 71 to 122 constitute an EGF-like 2; calcium-binding domain; it reads DINECGPPSPVDCGSSADCQNTEGGYYCTCSPGYEPVSGAMIFRNESENTCR. 2 N-linked (GlcNAc...) asparagine glycosylation sites follow: Asn-115 and Asn-136. One can recognise an EGF-like 3; calcium-binding domain in the interval 123–171; sequence DVDECSSGQHQCHNSTVCFNTVGSYTCHCREGWEPKHGLKNKQKDTICK. A GAIN-B domain is found at 265–441; that stretch reads TYRSLDNTEL…AILMAHYDVE (177 aa). N-linked (GlcNAc...) asparagine glycans are attached at residues Asn-285, Asn-327, Asn-372, Asn-403, and Asn-418. Intrachain disulfides connect Cys-393–Cys-423 and Cys-411–Cys-425. The GPS stretch occupies residues 393-441; sequence CAFWKKDSNGNGSWATTGCWKMGRGNGSITCQCSHLSSFAILMAHYDVE. Residues 450 to 470 traverse the membrane as a helical segment; that stretch reads KVGLALSLACLLLCILTFLLV. Topologically, residues 471 to 478 are cytoplasmic; that stretch reads RPIQGSRT. A helical transmembrane segment spans residues 479–499; that stretch reads TVHLHLCICLFVGSAIFLAGI. Topologically, residues 500–519 are extracellular; that stretch reads ENEGGEVGTRCRLVAVLLHY. Residues 520-540 form a helical membrane-spanning segment; the sequence is CFLAAFCWMSLEGVELYFLVV. Over 541 to 550 the chain is Cytoplasmic; it reads RVFQGQGMRK. Residues 551–571 traverse the membrane as a helical segment; it reads LWLCLIGYGVPLIIVGISAGA. The Extracellular portion of the chain corresponds to 572-593; it reads YSKGYGREKFCWLNFEGGFLWS. A helical membrane pass occupies residues 594-614; that stretch reads FVGPVTFIVLGNAIIFVITVW. At 615-637 the chain is on the cytoplasmic side; the sequence is KLTQKFSEINPDIKKLKKARVLT. A helical membrane pass occupies residues 638–658; sequence ITAIAQLFVLGCTWVFGLLLF. The Extracellular segment spans residues 659–662; sequence NPES. A helical transmembrane segment spans residues 663 to 683; sequence WVLSYIFSILNCLQGFFLFVL. At 684–734 the chain is on the cytoplasmic side; sequence YCLLNKKVREEYRKWACMVAGNKYSEFATTTSGSGSSHNQTQALRPSESGM. The interval 712 to 734 is disordered; sequence TTTSGSGSSHNQTQALRPSESGM. Thr-713 is modified (phosphothreonine). Ser-715 bears the Phosphoserine mark. Thr-724 is modified (phosphothreonine). Ser-730 and Ser-732 each carry phosphoserine.

Belongs to the G-protein coupled receptor 2 family. LN-TM7 subfamily. Forms a heterodimer, consisting of a large extracellular region (alpha subunit) non-covalently linked to a seven-transmembrane moiety (beta subunit). Interacts with complement decay-accelerating factor (DAF) and with chondroitin sulfate. In terms of processing, proteolytically cleaved into 2 subunits, an extracellular alpha subunit and a seven-transmembrane subunit.

It localises to the cell membrane. Its subcellular location is the secreted. The protein localises to the extracellular space. Its function is as follows. Receptor potentially involved in both adhesion and signaling processes early after leukocyte activation. Plays an essential role in leukocyte migration. The sequence is that of Adhesion G protein-coupled receptor E5 from Bos taurus (Bovine).